Consider the following 159-residue polypeptide: 2-C-methyl-D-erythritol 2,4-cyclodiphosphate synthase (159 aa).

A divalent metal cation contacts are provided by Asp-8 and His-10. Residues 8–10 (DVH) and 34–35 (HS) each bind 4-CDP-2-C-methyl-D-erythritol 2-phosphate. His-42 lines the a divalent metal cation pocket. 4-CDP-2-C-methyl-D-erythritol 2-phosphate contacts are provided by residues 56 to 58 (DIG), 61 to 65 (FPDTD), 100 to 106 (AQAPKMA), 132 to 135 (TTSE), Phe-139, and Arg-142.

This sequence belongs to the IspF family. Homotrimer. A divalent metal cation serves as cofactor.

It catalyses the reaction 4-CDP-2-C-methyl-D-erythritol 2-phosphate = 2-C-methyl-D-erythritol 2,4-cyclic diphosphate + CMP. It participates in isoprenoid biosynthesis; isopentenyl diphosphate biosynthesis via DXP pathway; isopentenyl diphosphate from 1-deoxy-D-xylulose 5-phosphate: step 4/6. Functionally, involved in the biosynthesis of isopentenyl diphosphate (IPP) and dimethylallyl diphosphate (DMAPP), two major building blocks of isoprenoid compounds. Catalyzes the conversion of 4-diphosphocytidyl-2-C-methyl-D-erythritol 2-phosphate (CDP-ME2P) to 2-C-methyl-D-erythritol 2,4-cyclodiphosphate (ME-CPP) with a corresponding release of cytidine 5-monophosphate (CMP). This chain is 2-C-methyl-D-erythritol 2,4-cyclodiphosphate synthase, found in Aliivibrio salmonicida (strain LFI1238) (Vibrio salmonicida (strain LFI1238)).